Reading from the N-terminus, the 393-residue chain is Aspartate aminotransferase (393 aa).

Glycine 38, tryptophan 124, and asparagine 174 together coordinate L-aspartate. At lysine 237 the chain carries N6-(pyridoxal phosphate)lysine.

It belongs to the class-I pyridoxal-phosphate-dependent aminotransferase family. In terms of assembly, homodimer. Pyridoxal 5'-phosphate is required as a cofactor.

The protein resides in the cytoplasm. The catalysed reaction is L-aspartate + 2-oxoglutarate = oxaloacetate + L-glutamate. The polypeptide is Aspartate aminotransferase (aspC) (Geobacillus stearothermophilus (Bacillus stearothermophilus)).